We begin with the raw amino-acid sequence, 377 residues long: 4-hydroxy-3-methylbut-2-en-1-yl diphosphate synthase (flavodoxin) (377 aa).

C270, C273, C305, and E312 together coordinate [4Fe-4S] cluster.

It belongs to the IspG family. [4Fe-4S] cluster is required as a cofactor.

It carries out the reaction (2E)-4-hydroxy-3-methylbut-2-enyl diphosphate + oxidized [flavodoxin] + H2O + 2 H(+) = 2-C-methyl-D-erythritol 2,4-cyclic diphosphate + reduced [flavodoxin]. The protein operates within isoprenoid biosynthesis; isopentenyl diphosphate biosynthesis via DXP pathway; isopentenyl diphosphate from 1-deoxy-D-xylulose 5-phosphate: step 5/6. Its function is as follows. Converts 2C-methyl-D-erythritol 2,4-cyclodiphosphate (ME-2,4cPP) into 1-hydroxy-2-methyl-2-(E)-butenyl 4-diphosphate. This is 4-hydroxy-3-methylbut-2-en-1-yl diphosphate synthase (flavodoxin) from Bacillus subtilis (strain 168).